Consider the following 234-residue polypeptide: 2,3,4,5-tetrahydropyridine-2,6-dicarboxylate N-acetyltransferase (234 aa).

It belongs to the transferase hexapeptide repeat family. DapH subfamily.

It carries out the reaction (S)-2,3,4,5-tetrahydrodipicolinate + acetyl-CoA + H2O = L-2-acetamido-6-oxoheptanedioate + CoA. The protein operates within amino-acid biosynthesis; L-lysine biosynthesis via DAP pathway; LL-2,6-diaminopimelate from (S)-tetrahydrodipicolinate (acetylase route): step 1/3. Functionally, catalyzes the transfer of an acetyl group from acetyl-CoA to tetrahydrodipicolinate. The chain is 2,3,4,5-tetrahydropyridine-2,6-dicarboxylate N-acetyltransferase from Ligilactobacillus salivarius (strain UCC118) (Lactobacillus salivarius).